The following is a 126-amino-acid chain: Phosphoribosyl-AMP cyclohydrolase (126 aa).

Aspartate 82 contacts Mg(2+). Residue cysteine 83 coordinates Zn(2+). Positions 84 and 86 each coordinate Mg(2+). Residues cysteine 99 and cysteine 106 each coordinate Zn(2+).

The protein belongs to the PRA-CH family. In terms of assembly, homodimer. The cofactor is Mg(2+). It depends on Zn(2+) as a cofactor.

It is found in the cytoplasm. It carries out the reaction 1-(5-phospho-beta-D-ribosyl)-5'-AMP + H2O = 1-(5-phospho-beta-D-ribosyl)-5-[(5-phospho-beta-D-ribosylamino)methylideneamino]imidazole-4-carboxamide. It participates in amino-acid biosynthesis; L-histidine biosynthesis; L-histidine from 5-phospho-alpha-D-ribose 1-diphosphate: step 3/9. Functionally, catalyzes the hydrolysis of the adenine ring of phosphoribosyl-AMP. This chain is Phosphoribosyl-AMP cyclohydrolase, found in Sphingopyxis alaskensis (strain DSM 13593 / LMG 18877 / RB2256) (Sphingomonas alaskensis).